Here is a 392-residue protein sequence, read N- to C-terminus: MPSNATDALAIAQDLLRCPSVTPADAGALGVLERLLHAAGFAVHRVTFSEPGTADIDNLYARIGTTAPHICFAGHTDVVPPGDEAAWSHDAFAGEVHDGLLYGRGAVDMKGGIACSVAAVLQHLATHGGQPHESGQGSISFLITGDEEDVAVNGTVKLLQWAAARGETFDHCVLGEPSNVEALGDTIKIGRRGSLSGTLIVDGVQGHVAYPHRASNPVPDIAALIVALGAEPLDAGTDTFQPSNLEFTSVDVGNPATNVIPAQARAKFNIRFNDRHSAESLQTLIEARVQAACGNRIRARIDWQPSNAGAFVTKPGAFTDLVAAAIEDVTGRKPELNTGGGTSDARFITHYCPVIEFGLVGQTMHKIDERTPVADLETLTQIYRGVLQRYFA.

H75 contributes to the Zn(2+) binding site. The active site involves D77. D108 is a Zn(2+) binding site. E147 serves as the catalytic Proton acceptor. 3 residues coordinate Zn(2+): E148, E176, and H365.

Belongs to the peptidase M20A family. DapE subfamily. Homodimer. The cofactor is Zn(2+). Co(2+) serves as cofactor.

It catalyses the reaction N-succinyl-(2S,6S)-2,6-diaminopimelate + H2O = (2S,6S)-2,6-diaminopimelate + succinate. It participates in amino-acid biosynthesis; L-lysine biosynthesis via DAP pathway; LL-2,6-diaminopimelate from (S)-tetrahydrodipicolinate (succinylase route): step 3/3. In terms of biological role, catalyzes the hydrolysis of N-succinyl-L,L-diaminopimelic acid (SDAP), forming succinate and LL-2,6-diaminopimelate (DAP), an intermediate involved in the bacterial biosynthesis of lysine and meso-diaminopimelic acid, an essential component of bacterial cell walls. In Rhodopseudomonas palustris (strain BisB18), this protein is Succinyl-diaminopimelate desuccinylase.